A 176-amino-acid chain; its full sequence is Large ribosomal subunit protein uL6 (176 aa).

A compositionally biased stretch (basic and acidic residues) spans 156-170; the sequence is YKGKGVRYADEQVRR. The interval 156–176 is disordered; that stretch reads YKGKGVRYADEQVRRKEAKKK.

Belongs to the universal ribosomal protein uL6 family. Part of the 50S ribosomal subunit.

Functionally, this protein binds to the 23S rRNA, and is important in its secondary structure. It is located near the subunit interface in the base of the L7/L12 stalk, and near the tRNA binding site of the peptidyltransferase center. The chain is Large ribosomal subunit protein uL6 from Shewanella woodyi (strain ATCC 51908 / MS32).